Consider the following 434-residue polypeptide: Glycylpeptide N-tetradecanoyltransferase 1 (434 aa).

The interval 1–24 (MADNNSPPGSVEQKADQIVEANPL) is disordered. At alanine 2 the chain carries N-acetylalanine. Residues 48 to 51 (HKFW), 184 to 186 (LCV), and 192 to 196 (SKRLA) each bind tetradecanoyl-CoA. The Proton acceptor; via carboxylate role is filled by leucine 434.

It belongs to the NMT family. As to expression, expressed ubiquitously, with higher levels in young tissues (at protein level).

The protein resides in the cytoplasm. The catalysed reaction is N-terminal glycyl-[protein] + tetradecanoyl-CoA = N-tetradecanoylglycyl-[protein] + CoA + H(+). Its function is as follows. Adds a myristoyl group to the N-terminal glycine residue of certain cellular proteins. Can also use decanoyl-CoA and lauroyl-CoA as substrates. The sequence is that of Glycylpeptide N-tetradecanoyltransferase 1 (NMT1) from Arabidopsis thaliana (Mouse-ear cress).